The sequence spans 136 residues: Small ribosomal subunit protein bS16 (136 aa).

Positions leucine 113 to alanine 122 are enriched in basic residues. The segment at leucine 113–alanine 136 is disordered.

This sequence belongs to the bacterial ribosomal protein bS16 family.

This chain is Small ribosomal subunit protein bS16, found in Pelodictyon phaeoclathratiforme (strain DSM 5477 / BU-1).